The primary structure comprises 599 residues: Aspartate--tRNA(Asp/Asn) ligase (599 aa).

E174 provides a ligand contact to L-aspartate. An aspartate region spans residues Q198–K201. Residue R220 participates in L-aspartate binding. ATP is bound by residues R220–E222 and Q229. H457 is a binding site for L-aspartate. ATP is bound at residue E491. R498 serves as a coordination point for L-aspartate. G543–R546 provides a ligand contact to ATP.

This sequence belongs to the class-II aminoacyl-tRNA synthetase family. Type 1 subfamily. As to quaternary structure, homodimer.

Its subcellular location is the cytoplasm. It carries out the reaction tRNA(Asx) + L-aspartate + ATP = L-aspartyl-tRNA(Asx) + AMP + diphosphate. Functionally, aspartyl-tRNA synthetase with relaxed tRNA specificity since it is able to aspartylate not only its cognate tRNA(Asp) but also tRNA(Asn). Reaction proceeds in two steps: L-aspartate is first activated by ATP to form Asp-AMP and then transferred to the acceptor end of tRNA(Asp/Asn). This chain is Aspartate--tRNA(Asp/Asn) ligase, found in Paraburkholderia phymatum (strain DSM 17167 / CIP 108236 / LMG 21445 / STM815) (Burkholderia phymatum).